A 267-amino-acid chain; its full sequence is N-formylglutamate deformylase (267 aa).

This sequence belongs to the N-formylglutamate deformylase family. Monomer.

The enzyme catalyses N-formyl-L-glutamate + H2O = formate + L-glutamate. Its pathway is amino-acid degradation; L-histidine degradation into L-glutamate; L-glutamate from N-formimidoyl-L-glutamate (deiminase route): step 2/2. Its activity is regulated as follows. Stimulated by Co(2+). Fe(2+) is also a good activator, particularly at lower concentrations, but it inhibits slightly the activity when used at concentrations over 0.1 mM. Other divalent metals tested (Cd(2+), Ca(2+), Mn(2+), Zn(2+), Ni(2+) and Mg(2+)) are not effective activators. Functionally, catalyzes the hydrolysis of N-formyl-L-glutamate to formate and L-glutamate. This chain is N-formylglutamate deformylase, found in Pseudomonas putida (Arthrobacter siderocapsulatus).